The primary structure comprises 823 residues: Zygotic DNA replication licensing factor mcm6 (823 aa).

Residues 159–186 (CLDCQTLVRDVEQQFKYTQPSICRNPVC) form a C4-type zinc finger. The 208-residue stretch at 347–554 (LYHNLCTSLF…TDYAIARRIV (208 aa)) folds into the MCM domain. An ATP-binding site is contributed by 397-404 (GDPSTAKS). The Arginine finger motif lies at 529 to 532 (SRFD). The disordered stretch occupies residues 666 to 713 (NLDQEDEHEAEEEPQEVINGDASVPSGVNGHVNGMNGHAEEPNAATPK). The span at 667–680 (LDQEDEHEAEEEPQ) shows a compositional bias: acidic residues. Residues 692–702 (GVNGHVNGMNG) show a composition bias toward low complexity.

The protein belongs to the MCM family. As to quaternary structure, component of the mcm2-7 complex (RLF-M). The complex forms a toroidal hexameric ring with the proposed subunit order mcm2-mcm6-mcm4-mcm7-mcm3-mcm5. Begins to associate with zmcm3, mcm4 and mcm7 into mcm complexes at the neurula stage.

It localises to the nucleus. The enzyme catalyses ATP + H2O = ADP + phosphate + H(+). Functionally, acts as a component of the mcm2-7 complex (mcm complex) which is the putative replicative helicase essential for 'once per cell cycle' DNA replication initiation and elongation in eukaryotic cells. The active ATPase sites in the mcm2-7 ring are formed through the interaction surfaces of two neighboring subunits such that a critical structure of a conserved arginine finger motif is provided in trans relative to the ATP-binding site of the Walker A box of the adjacent subunit. The six ATPase active sites, however, are likely to contribute differentially to the complex helicase activity. The existence of maternal and zygotic forms of mcm3 and mcm6 suggests that specific forms of mcm2-7 complexes may be used during different stages of development. May replace mmcm6 in the mcm2-7 complex. In Xenopus tropicalis (Western clawed frog), this protein is Zygotic DNA replication licensing factor mcm6.